A 198-amino-acid chain; its full sequence is NAD(P)H dehydrogenase (quinone) (198 aa).

The Flavodoxin-like domain occupies 6-190 (ILVLYYSRHG…LCRALGKRLA (185 aa)). FMN contacts are provided by residues 12 to 17 (SRHGAT), 79 to 81 (TRF), 114 to 120 (STASLHG), and histidine 135.

This sequence belongs to the WrbA family. Homodimer. The cofactor is FMN.

It carries out the reaction a quinone + NADH + H(+) = a quinol + NAD(+). The catalysed reaction is a quinone + NADPH + H(+) = a quinol + NADP(+). The chain is NAD(P)H dehydrogenase (quinone) from Pseudomonas aeruginosa (strain ATCC 15692 / DSM 22644 / CIP 104116 / JCM 14847 / LMG 12228 / 1C / PRS 101 / PAO1).